Here is a 392-residue protein sequence, read N- to C-terminus: Extracellular metalloproteinase 4 (392 aa).

Positions 1–9 (VHSVVDYVS) are excised as a propeptide. Asn176 carries an N-linked (GlcNAc...) asparagine glycan. Residue His193 participates in Zn(2+) binding. The active site involves Glu194. Residue His197 participates in Zn(2+) binding. Asn359 and Asn385 each carry an N-linked (GlcNAc...) asparagine glycan.

The protein belongs to the peptidase M36 family. It depends on Zn(2+) as a cofactor.

It is found in the secreted. Secreted metalloproteinase probably acting as a virulence factor. This chain is Extracellular metalloproteinase 4 (MEP4), found in Trichophyton soudanense.